We begin with the raw amino-acid sequence, 83 residues long: Cytochrome b559 subunit alpha (83 aa).

Residues 22–36 (VIHSITIPALFIAGW) form a helical membrane-spanning segment. Histidine 24 is a binding site for heme.

The protein belongs to the PsbE/PsbF family. In terms of assembly, heterodimer of an alpha subunit and a beta subunit. PSII is composed of 1 copy each of membrane proteins PsbA, PsbB, PsbC, PsbD, PsbE, PsbF, PsbH, PsbI, PsbJ, PsbK, PsbL, PsbM, PsbT, PsbX, PsbY, PsbZ, Psb30/Ycf12, peripheral proteins PsbO, CyanoQ (PsbQ), PsbU, PsbV and a large number of cofactors. It forms dimeric complexes. Heme b serves as cofactor.

It is found in the cellular thylakoid membrane. In terms of biological role, this b-type cytochrome is tightly associated with the reaction center of photosystem II (PSII). PSII is a light-driven water:plastoquinone oxidoreductase that uses light energy to abstract electrons from H(2)O, generating O(2) and a proton gradient subsequently used for ATP formation. It consists of a core antenna complex that captures photons, and an electron transfer chain that converts photonic excitation into a charge separation. The protein is Cytochrome b559 subunit alpha of Synechococcus elongatus (strain ATCC 33912 / PCC 7942 / FACHB-805) (Anacystis nidulans R2).